A 267-amino-acid chain; its full sequence is Probable ribose-5-phosphate isomerase 1 (267 aa).

Gly-2 carries the post-translational modification N-acetylglycine. At Ser-92 the chain carries Phosphoserine.

It belongs to the ribose 5-phosphate isomerase family. In terms of tissue distribution, expressed in roots, cotyledons, leaves and flowers.

It is found in the cytoplasm. The catalysed reaction is aldehydo-D-ribose 5-phosphate = D-ribulose 5-phosphate. Its pathway is carbohydrate degradation; pentose phosphate pathway; D-ribose 5-phosphate from D-ribulose 5-phosphate (non-oxidative stage): step 1/1. Catalyzes the reversible conversion of ribose-5-phosphate to ribulose 5-phosphate. This chain is Probable ribose-5-phosphate isomerase 1 (RPI1), found in Arabidopsis thaliana (Mouse-ear cress).